A 213-amino-acid chain; its full sequence is Ethylene-responsive transcription factor WIN1 (213 aa).

A DNA-binding region (AP2/ERF) is located at residues 15–72; sequence KFRGVRQRHWGSWVSEIRHPLLKRRVWLGTFETAEEAARAYDEAAVLMSGRNAKTNFP. Polar residues predominate over residues 70-80; sequence NFPIQRSSTGE. Disordered regions lie at residues 70–99 and 159–213; these read NFPI…GSST and ASTD…RFII. Residues 159 to 174 show a composition bias toward low complexity; sequence ASTDAASQSTSATTAP.

This sequence belongs to the AP2/ERF transcription factor family. ERF subfamily. In terms of tissue distribution, mostly expressed in roots, stems and anthers, and, to a lower extent, in leaves, seeds and silks.

It is found in the nucleus. In terms of biological role, promotes cuticle formation by inducing the expression of enzymes involved in wax biosynthesis, particularly promoting very-long-chain waxes formation. Confers drought resistance. Acts as a transcriptional activator binding directly to promoter regions of CER2, CER3.2 and KCS1, wax biosynthesis-related genes. Binds to the GCC-box pathogenesis-related promoter element. May be involved in the regulation of gene expression by stress factors and by components of stress signal transduction pathways. The polypeptide is Ethylene-responsive transcription factor WIN1 (Zea mays (Maize)).